A 1357-amino-acid polypeptide reads, in one-letter code: DNA-directed RNA polymerase subunit beta (1357 aa).

The protein belongs to the RNA polymerase beta chain family. In terms of assembly, the RNAP catalytic core consists of 2 alpha, 1 beta, 1 beta' and 1 omega subunit. When a sigma factor is associated with the core the holoenzyme is formed, which can initiate transcription.

It carries out the reaction RNA(n) + a ribonucleoside 5'-triphosphate = RNA(n+1) + diphosphate. Functionally, DNA-dependent RNA polymerase catalyzes the transcription of DNA into RNA using the four ribonucleoside triphosphates as substrates. The chain is DNA-directed RNA polymerase subunit beta from Pseudomonas aeruginosa (strain ATCC 15692 / DSM 22644 / CIP 104116 / JCM 14847 / LMG 12228 / 1C / PRS 101 / PAO1).